We begin with the raw amino-acid sequence, 581 residues long: Putative ABC transporter ATP-binding protein MM_1996 (581 aa).

An ABC transporter 1 domain is found at 10–250 (IEIRDLWYTY…LEVFHRLGLR (241 aa)). 44–51 (GPTGCGKS) contributes to the ATP binding site. The disordered stretch occupies residues 287-309 (GDYPASPGRKEKTSSPGWSSENN). A compositionally biased stretch (polar residues) spans 300-309 (SSPGWSSENN). In terms of domain architecture, ABC transporter 2 spans 313–541 (VSVRDLWSGY…IDILRKASLT (229 aa)). 346 to 353 (GTNGSGKS) serves as a coordination point for ATP.

The protein belongs to the ABC transporter superfamily.

The protein resides in the cell membrane. Functionally, probably part of an ABC transporter complex. Responsible for energy coupling to the transport system. The chain is Putative ABC transporter ATP-binding protein MM_1996 from Methanosarcina mazei (strain ATCC BAA-159 / DSM 3647 / Goe1 / Go1 / JCM 11833 / OCM 88) (Methanosarcina frisia).